Here is a 103-residue protein sequence, read N- to C-terminus: Large ribosomal subunit protein bL21 (103 aa).

The protein belongs to the bacterial ribosomal protein bL21 family. In terms of assembly, part of the 50S ribosomal subunit. Contacts protein L20.

In terms of biological role, this protein binds to 23S rRNA in the presence of protein L20. This is Large ribosomal subunit protein bL21 from Marinobacter nauticus (strain ATCC 700491 / DSM 11845 / VT8) (Marinobacter aquaeolei).